A 109-amino-acid chain; its full sequence is UPF0122 protein ABC2295 (109 aa).

This sequence belongs to the UPF0122 family.

In terms of biological role, might take part in the signal recognition particle (SRP) pathway. This is inferred from the conservation of its genetic proximity to ftsY/ffh. May be a regulatory protein. This is UPF0122 protein ABC2295 from Shouchella clausii (strain KSM-K16) (Alkalihalobacillus clausii).